Here is a 274-residue protein sequence, read N- to C-terminus: Large ribosomal subunit protein uL2 (274 aa).

Residues 220-265 (VRGAAMNPRDHPHGGGEGRAPRGMSTPKTKWGKPARGVKTRHNPRF) form a disordered region. Positions 227-239 (PRDHPHGGGEGRA) are enriched in basic and acidic residues. Basic residues predominate over residues 249-262 (KWGKPARGVKTRHN).

This sequence belongs to the universal ribosomal protein uL2 family. As to quaternary structure, part of the 50S ribosomal subunit. Forms a bridge to the 30S subunit in the 70S ribosome.

Its function is as follows. One of the primary rRNA binding proteins. Required for association of the 30S and 50S subunits to form the 70S ribosome, for tRNA binding and peptide bond formation. It has been suggested to have peptidyltransferase activity; this is somewhat controversial. Makes several contacts with the 16S rRNA in the 70S ribosome. The polypeptide is Large ribosomal subunit protein uL2 (Chloroflexus aurantiacus (strain ATCC 29364 / DSM 637 / Y-400-fl)).